We begin with the raw amino-acid sequence, 126 residues long: Cystatin-like protein (126 aa).

The Secondary area of contact motif lies at 72 to 76; it reads QVVAG. A disulfide bridge connects residues Cys94 and Cys115.

Belongs to the cystatin family.

The sequence is that of Cystatin-like protein (Cys) from Drosophila melanogaster (Fruit fly).